We begin with the raw amino-acid sequence, 95 residues long: Glutaredoxin 1 (95 aa).

One can recognise a Glutaredoxin domain in the interval 1–95 (MNKSILHTII…DKLLEHQPKN (95 aa)). Cysteines 17 and 20 form a disulfide.

Belongs to the glutaredoxin family. In terms of assembly, monomer.

It is found in the cytoplasm. Functionally, has a glutathione-disulfide oxidoreductase activity in the presence of NADPH and glutathione reductase. Reduces low molecular weight disulfides and proteins. The sequence is that of Glutaredoxin 1 (grxC1) from Rickettsia prowazekii (strain Madrid E).